Reading from the N-terminus, the 140-residue chain is ATP synthase epsilon chain (140 aa).

Belongs to the ATPase epsilon chain family. In terms of assembly, F-type ATPases have 2 components, CF(1) - the catalytic core - and CF(0) - the membrane proton channel. CF(1) has five subunits: alpha(3), beta(3), gamma(1), delta(1), epsilon(1). CF(0) has three main subunits: a, b and c.

It localises to the cell inner membrane. Functionally, produces ATP from ADP in the presence of a proton gradient across the membrane. The sequence is that of ATP synthase epsilon chain from Bordetella bronchiseptica (strain ATCC BAA-588 / NCTC 13252 / RB50) (Alcaligenes bronchisepticus).